We begin with the raw amino-acid sequence, 171 residues long: Small ribosomal subunit protein uS13 (171 aa).

Residues 128–171 (HERGQKVRGQRTKSTGRTEGTIGVNVEAIKEEQAEDDAADGGEE) are disordered. A compositionally biased stretch (acidic residues) spans 160 to 171 (QAEDDAADGGEE).

Belongs to the universal ribosomal protein uS13 family. In terms of assembly, part of the 30S ribosomal subunit. Forms a loose heterodimer with protein S19. Forms two bridges to the 50S subunit in the 70S ribosome.

In terms of biological role, located at the top of the head of the 30S subunit, it contacts several helices of the 16S rRNA. In the 70S ribosome it contacts the 23S rRNA (bridge B1a) and protein L5 of the 50S subunit (bridge B1b), connecting the 2 subunits; these bridges are implicated in subunit movement. This Halobacterium salinarum (strain ATCC 700922 / JCM 11081 / NRC-1) (Halobacterium halobium) protein is Small ribosomal subunit protein uS13.